The primary structure comprises 509 residues: Kynureninase 1 (509 aa).

Pyridoxal 5'-phosphate-binding positions include Leu154, Thr155, 183–186 (FPSD), Asp270, His273, and Tyr295. At Lys296 the chain carries N6-(pyridoxal phosphate)lysine. The pyridoxal 5'-phosphate site is built by Trp345 and Asn373.

The protein belongs to the kynureninase family. Homodimer. Requires pyridoxal 5'-phosphate as cofactor.

Its subcellular location is the cytoplasm. It carries out the reaction L-kynurenine + H2O = anthranilate + L-alanine + H(+). The catalysed reaction is 3-hydroxy-L-kynurenine + H2O = 3-hydroxyanthranilate + L-alanine + H(+). It participates in amino-acid degradation; L-kynurenine degradation; L-alanine and anthranilate from L-kynurenine: step 1/1. The protein operates within cofactor biosynthesis; NAD(+) biosynthesis; quinolinate from L-kynurenine: step 2/3. Its function is as follows. Catalyzes the cleavage of L-kynurenine (L-Kyn) and L-3-hydroxykynurenine (L-3OHKyn) into anthranilic acid (AA) and 3-hydroxyanthranilic acid (3-OHAA), respectively. This is Kynureninase 1 from Chaetomium globosum (strain ATCC 6205 / CBS 148.51 / DSM 1962 / NBRC 6347 / NRRL 1970) (Soil fungus).